The primary structure comprises 282 residues: Malonyl-[acyl-carrier protein] O-methyltransferase 1 (282 aa).

This sequence belongs to the methyltransferase superfamily.

The catalysed reaction is malonyl-[ACP] + S-adenosyl-L-methionine = malonyl-[ACP] methyl ester + S-adenosyl-L-homocysteine. It participates in cofactor biosynthesis; biotin biosynthesis. In terms of biological role, converts the free carboxyl group of a malonyl-thioester to its methyl ester by transfer of a methyl group from S-adenosyl-L-methionine (SAM). It allows to synthesize pimeloyl-ACP via the fatty acid synthetic pathway. This chain is Malonyl-[acyl-carrier protein] O-methyltransferase 1, found in Coxiella burnetii (strain RSA 493 / Nine Mile phase I).